The primary structure comprises 341 residues: Putative [LysW]-lysine/[LysW]-ornithine hydrolase (341 aa).

His-62 is a Zn(2+) binding site. Asp-64 is an active-site residue. Asp-86 contributes to the Zn(2+) binding site. Glu-115 functions as the Proton acceptor in the catalytic mechanism. Zn(2+)-binding residues include Glu-116, Glu-140, and His-309.

Belongs to the peptidase M20A family. LysK subfamily. It depends on Zn(2+) as a cofactor. Co(2+) serves as cofactor.

Its subcellular location is the cytoplasm. The catalysed reaction is [amino-group carrier protein]-C-terminal-gamma-(L-lysyl)-L-glutamate + H2O = [amino-group carrier protein]-C-terminal-L-glutamate + L-lysine. It carries out the reaction [amino-group carrier protein]-C-terminal-gamma-(L-ornithyl)-L-glutamate + H2O = [amino-group carrier protein]-C-terminal-L-glutamate + L-ornithine. It functions in the pathway amino-acid biosynthesis; L-lysine biosynthesis via AAA pathway; L-lysine from L-alpha-aminoadipate (Thermus route): step 5/5. It participates in amino-acid biosynthesis; L-arginine biosynthesis. In terms of biological role, catalyzes the release of L-lysine from [LysW]-gamma-L-lysine and the release of L-ornithine from [LysW]-L-ornithine. In Pyrobaculum aerophilum (strain ATCC 51768 / DSM 7523 / JCM 9630 / CIP 104966 / NBRC 100827 / IM2), this protein is Putative [LysW]-lysine/[LysW]-ornithine hydrolase.